The sequence spans 29 residues: Trypsin inhibitor 4 (29 aa).

Disulfide bonds link Cys-3–Cys-20, Cys-10–Cys-22, and Cys-16–Cys-28.

This sequence belongs to the protease inhibitor I7 (squash-type serine protease inhibitor) family.

The protein resides in the secreted. Its function is as follows. Strongly inhibits trypsin, weakly inhibits chymotrypsin. The polypeptide is Trypsin inhibitor 4 (Cyclanthera pedata (Achocha)).